The sequence spans 507 residues: Monocarboxylate transporter 9 (507 aa).

Topologically, residues 1 to 12 (MVYRKPPDGGWG) are extracellular. Residues 13–33 (WVIVIVSFFTQFLCYGSPLAV) form a helical membrane-spanning segment. The Cytoplasmic segment spans residues 34 to 52 (GVLYLEWLDAFGEGKGKTA). A helical membrane pass occupies residues 53 to 73 (WVGSLANGIGLLASPVCSICV). At 74 to 79 (SSFGAR) the chain is on the extracellular side. The helical transmembrane segment at 80–100 (PVAIFSGFMVAGGLMMSSFAP) threads the bilayer. Topologically, residues 101–102 (NI) are cytoplasmic. The helical transmembrane segment at 103-123 (YFLYLSYGIVVGLGCGLLYNA) threads the bilayer. Residues 124-136 (TVTITCQYFDKRR) are Extracellular-facing. Residues 137-157 (GLALGLISTGSSVGLFIYAAL) form a helical membrane-spanning segment. The Cytoplasmic segment spans residues 158–163 (QRELIE). The helical transmembrane segment at 164–184 (LYGLDGCLLIVGALSLNILAC) threads the bilayer. Residues 185-302 (GSLMRPLESS…EETVVLFKNR (118 aa)) are Extracellular-facing. The helical transmembrane segment at 303-323 (VFSALFFAILLFDIGGFPPSL) threads the bilayer. Over 324–340 (LMEDIARSANINEEDYH) the chain is Cytoplasmic. Residues 341–361 (MPLVSIIGIMTAIGKLILGIL) traverse the membrane as a helical segment. Residues 362–369 (ADFKWVNT) lie on the Extracellular side of the membrane. Residues 370–390 (LYLYVLTLLMMGAALLAIPFA) form a helical membrane-spanning segment. At 391–395 (RSYFT) the chain is on the cytoplasmic side. The chain crosses the membrane as a helical span at residues 396–416 (LAVLSGILGFLTGNWSIFPYV). The Extracellular portion of the chain corresponds to 417-430 (TTKTVGIEKLTHAY). A helical transmembrane segment spans residues 431 to 451 (GILMFFAGLGNSLGPPIVGWF). The Cytoplasmic portion of the chain corresponds to 452–460 (YDWTQEYDT). Residues 461-481 (AFYFSGFCVLLGGFLLLLAAL) form a helical membrane-spanning segment. The Extracellular portion of the chain corresponds to 482 to 507 (PCWNACTDRSSKLPPNTYSYKVASSA).

This sequence belongs to the major facilitator superfamily. Monocarboxylate porter (TC 2.A.1.13) family.

The protein localises to the cell membrane. The catalysed reaction is creatine(in) = creatine(out). The enzyme catalyses (R)-carnitine(in) = (R)-carnitine(out). Functionally, extracellular pH-and Na(+)-sensitive low-affinity creatine transporter. Also functions as a pH-independent carnitine efflux transporter. This chain is Monocarboxylate transporter 9 (SLC16A9), found in Gallus gallus (Chicken).